An 862-amino-acid polypeptide reads, in one-letter code: MLGWLVIPWNQIFTAACGCFLSDRNYIHMMESNLDALQKTMEELKNGRDDLLGRVSIEEDKGLQRLAQVNGWLSRVQIVESEFKDLLEAMSIETGRLCLLGYCSEDCISSYNYGEKVSKMLEEVKELLSKKDFRMVAQEIIHKVEKKLIQTTVGLDKLVEMAWSSLMNDEIGTLGLYGMGGVGKTTLLESLNNKFVELESEFDVVIWVVVSKDFQFEGIQDQILGRLRSDKEWERETESKKASLIYNNLERKKFVLLLDDLWSEVDMTKIGVPPPTRENGSKIVFTTRSTEVCKHMKADKQIKVACLSPDEAWELFRLTVGDIILRSHQDIPALARIVAAKCHGLPLALNVIGKAMSCKETIQEWSHAINVLNSAGHEFPGMEERILPILKFSYDSLKNGEIKLCFLYCSLFPEDSEIPKEKWIEYWICEGFINPNRYEDGGTNHGYDIIGLLVRAHLLIECELTDNVKMHDVIREMALWINSDFGKQQETICVKSGAHVRMIPNDINWEIVRTMSFTCTQIKKISCRSKCPNLSTLLILDNRLLVKISNRFFRFMPKLVVLDLSANLDLIKLPEEISNLGSLQYLNISLTGIKSLPVGLKKLRKLIYLNLEFTGVHGSLVGIAATLPNLQVLKFFYSCVYVDDILMKELQDLEHLKILTANVKDVTILERIQGDDRLASSIRSLCLEDMSTPRVILSTIALGGLQQLAILMCNISEIRIDWESKERRELSPTEILPSTGSPGFKQLSTVYINQLEGQRDLSWLLYAQNLKKLEVCWSPQIEEIINKEKGMNITKLHRDIVVPFGNLEDLALRQMADLTEICWNYRTLPNLRKSYINDCPKLPEDIFVPLLPEKSPSRFFFF.

Residues 24 to 61 (RNYIHMMESNLDALQKTMEELKNGRDDLLGRVSIEEDK) are a coiled coil. The 304-residue stretch at 135–438 (MVAQEIIHKV…CEGFINPNRY (304 aa)) folds into the NB-ARC domain. 178-185 (GMGGVGKT) contributes to the ATP binding site. 4 LRR repeats span residues 511–532 (IVRT…SKCP), 533–555 (NLST…FFRF), 558–580 (KLVV…ISNL), and 582–604 (SLQY…KKLR).

Belongs to the disease resistance NB-LRR family.

Functionally, probable disease resistance protein. This chain is Probable disease resistance protein At5g43740, found in Arabidopsis thaliana (Mouse-ear cress).